The primary structure comprises 540 residues: Beta-glucosidase 1B (540 aa).

Residues glutamine 25, histidine 128, and asparagine 174 each coordinate substrate. Residue glutamate 175 is the Proton donor of the active site. Tyrosine 316 is a binding site for substrate. Glutamate 380 acts as the Nucleophile in catalysis. Residues tryptophan 430 and 437–438 each bind substrate; that span reads EW. A compositionally biased stretch (low complexity) spans 481-492; the sequence is PAAETKKAATPS. Residues 481-524 are disordered; sequence PAAETKKAATPSPLKPHGAISNGVSKKSSATKEPKSASRKKGRK.

Belongs to the glycosyl hydrolase 1 family.

The enzyme catalyses Hydrolysis of terminal, non-reducing beta-D-glucosyl residues with release of beta-D-glucose.. Functionally, plays an important role in cellulose degradation. Shows hydrolytic activity against several glycosidic compounds. The polypeptide is Beta-glucosidase 1B (Phanerodontia chrysosporium (White-rot fungus)).